The primary structure comprises 782 residues: cGMP-specific 3',5'-cyclic phosphodiesterase gamma (782 aa).

Over 1 to 69 (MKHMFKNILF…LCDNMYSKKY (69 aa)) the chain is Cytoplasmic. The chain crosses the membrane as a helical span at residues 70 to 90 (VILVSHLISLLLMYSVCLIVG). At 91–97 (NINDLFS) the chain is on the extracellular side. A helical membrane pass occupies residues 98 to 118 (VLKLTYILLHTFTAINIILIL). Residues 119–135 (TLHATHYVEMFKSIKGE) are Cytoplasmic-facing. A helical transmembrane segment spans residues 136 to 156 (IFIFYIMMIFVIWCSWLFILF). Residues 157–181 (NNIKDLLPIVVNVNNFLYATYANNK) are Extracellular-facing. A helical transmembrane segment spans residues 182 to 202 (INIVLGFFAYLPIFYLITIIP). The Cytoplasmic portion of the chain corresponds to 203 to 208 (CRICYS). Residues 209–229 (CAFDILFFIMKVAIFSVYYLI) form a helical membrane-spanning segment. The Extracellular segment spans residues 230-239 (TMKSYILTDN). A helical transmembrane segment spans residues 240–260 (IFMIISALVGSLFIFVIRYII). Residues 261–782 (EIQRRLSFHN…YAPNLNIYKL (522 aa)) are Cytoplasmic-facing. The segment at 376–396 (GSKEEPEAESESECVDESKEG) is disordered. Over residues 381–390 (PEAESESECV) the composition is skewed to acidic residues. A PDEase domain is found at 423 to 751 (YEEKENEILK…SKWTKIEKDE (329 aa)). Catalysis depends on histidine 504, which acts as the Proton donor. 504–508 (HNSIH) provides a ligand contact to a nucleoside 3',5'-cyclic phosphate. Residues histidine 508, histidine 544, aspartate 545, and aspartate 654 each coordinate a divalent metal cation. Residues aspartate 545, aspartate 654, and glutamine 706 each coordinate a nucleoside 3',5'-cyclic phosphate.

The protein belongs to the cyclic nucleotide phosphodiesterase family. A divalent metal cation serves as cofactor.

It is found in the membrane. The protein localises to the endoplasmic reticulum membrane. It carries out the reaction 3',5'-cyclic GMP + H2O = GMP + H(+). It participates in purine metabolism; 3',5'-cyclic GMP degradation; GMP from 3',5'-cyclic GMP: step 1/1. Its function is as follows. Specifically hydrolyzes the second messenger cGMP, which is a key regulator of many important physiological processes. Probably by regulating cGMP levels, required for sporozoite motility and invasion of the mosquito salivary glands. This Plasmodium yoelii protein is cGMP-specific 3',5'-cyclic phosphodiesterase gamma.